The following is a 291-amino-acid chain: Exosome complex component RRP42 (291 aa).

Ala-2 is modified (N-acetylalanine). Lys-116 carries the N6-acetyllysine modification. Ser-177 is subject to Phosphoserine.

Belongs to the RNase PH family. In terms of assembly, component of the RNA exosome core complex (Exo-9), composed of EXOSC1, EXOSC2, EXOSC3, EXOSC4, EXOSC5, EXOSC6, EXOSC7, EXOSC8 and EXOSC9; within the complex interacts with EXOSC2 and EXOSC4. The catalytically inactive RNA exosome core complex (Exo-9) associates with the catalytic subunit EXOSC10/RRP6. Exo-9 may associate with DIS3 to form the nucleolar exosome complex, or DIS3L to form the cytoplasmic exosome complex. Exo-9 is formed by a hexameric base ring consisting of the heterodimers EXOSC4-EXOSC9, EXOSC5-EXOSC8 and EXOSC6-EXOSC7, and a cap ring consisting of EXOSC1, EXOSC2 and EXOSC3. The RNA exosome complex associates with cofactors C1D/RRP47, MPHOSPH6/MPP6 and MTREX/MTR4. Interacts with ZC3HAV1. Interacts with DIS3; the interaction is direct.

The protein localises to the nucleus. It localises to the nucleolus. Its subcellular location is the cytoplasm. Its function is as follows. Non-catalytic component of the RNA exosome complex which has 3'-&gt;5' exoribonuclease activity and participates in a multitude of cellular RNA processing and degradation events. In the nucleus, the RNA exosome complex is involved in proper maturation of stable RNA species such as rRNA, snRNA and snoRNA, in the elimination of RNA processing by-products and non-coding 'pervasive' transcripts, such as antisense RNA species and promoter-upstream transcripts (PROMPTs), and of mRNAs with processing defects, thereby limiting or excluding their export to the cytoplasm. The RNA exosome may be involved in Ig class switch recombination (CSR) and/or Ig variable region somatic hypermutation (SHM) by targeting AICDA deamination activity to transcribed dsDNA substrates. In the cytoplasm, the RNA exosome complex is involved in general mRNA turnover and specifically degrades inherently unstable mRNAs containing AU-rich elements (AREs) within their 3' untranslated regions, and in RNA surveillance pathways, preventing translation of aberrant mRNAs. It seems to be involved in degradation of histone mRNA. The catalytic inactive RNA exosome core complex of 9 subunits (Exo-9) is proposed to play a pivotal role in the binding and presentation of RNA for ribonucleolysis, and to serve as a scaffold for the association with catalytic subunits and accessory proteins or complexes. The protein is Exosome complex component RRP42 (EXOSC7) of Homo sapiens (Human).